The chain runs to 228 residues: MNSTTQAPQPVYQWTADEAIRFLKEWNFSLGIILLFVTIILQFGYTSRSMFVYVVKMILLWLMWPLTIVLCIFNCVYALNNVYLGFSIVFTIVSIIMWIMYFVNSIRLFIRTGSWWSFNPETNNLMCTDMKGTVYVRPIIEDYHTLTATIIRGHLYMQGVKLGTGFSLSDLPAYVTVAKVSHLCTYKRAFLDKVDGVSGFAVYVKSKVGNYRLPSNKPSGMDTALLRI.

The N-linked (GlcNAc...) asparagine; by host glycan is linked to N2. Over 2–25 (NSTTQAPQPVYQWTADEAIRFLKE) the chain is Virion surface. A helical membrane pass occupies residues 26–46 (WNFSLGIILLFVTIILQFGYT). Residues 47–56 (SRSMFVYVVK) lie on the Intravirion side of the membrane. The chain crosses the membrane as a helical span at residues 57–77 (MILLWLMWPLTIVLCIFNCVY). Residues 78–85 (ALNNVYLG) lie on the Virion surface side of the membrane. A helical transmembrane segment spans residues 86–106 (FSIVFTIVSIIMWIMYFVNSI). The Intravirion portion of the chain corresponds to 107–228 (RLFIRTGSWW…SGMDTALLRI (122 aa)).

Belongs to the betacoronaviruses M protein family. As to quaternary structure, homomultimer. Interacts with envelope E protein in the budding compartment of the host cell, which is located between endoplasmic reticulum and the Golgi complex. Forms a complex with HE and S proteins. Interacts with nucleocapsid N protein. This interaction probably participates in RNA packaging into the virus.

It is found in the virion membrane. It localises to the host Golgi apparatus membrane. Functionally, component of the viral envelope that plays a central role in virus morphogenesis and assembly via its interactions with other viral proteins. In Mus musculus (Mouse), this protein is Membrane protein.